We begin with the raw amino-acid sequence, 325 residues long: N-acetyl-gamma-glutamyl-phosphate reductase (325 aa).

Cys135 is a catalytic residue.

It belongs to the NAGSA dehydrogenase family. Type 1 subfamily.

The protein resides in the cytoplasm. The enzyme catalyses N-acetyl-L-glutamate 5-semialdehyde + phosphate + NADP(+) = N-acetyl-L-glutamyl 5-phosphate + NADPH + H(+). It participates in amino-acid biosynthesis; L-arginine biosynthesis; N(2)-acetyl-L-ornithine from L-glutamate: step 3/4. Its function is as follows. Catalyzes the NADPH-dependent reduction of N-acetyl-5-glutamyl phosphate to yield N-acetyl-L-glutamate 5-semialdehyde. The sequence is that of N-acetyl-gamma-glutamyl-phosphate reductase from Karelsulcia muelleri (strain GWSS) (Sulcia muelleri).